The chain runs to 77 residues: Epoxide hydrolase (77 aa).

Monomer.

It carries out the reaction an epoxide + H2O = an ethanediol. In terms of biological role, this enzyme acts on aliphatic epoxides. Its substrates include epichlorohydrin, epibromohydrin, epoxyoctane and styrene epoxide. The sequence is that of Epoxide hydrolase from Pseudomonas sp. (strain AD1).